Here is a 36-residue protein sequence, read N- to C-terminus: uncharacterized protein (36 aa).

Polar residues predominate over residues 1–14 (MNQLGSGPTKQGVA). Residues 1–36 (MNQLGSGPTKQGVATNTGSTGTTKNNSNLSGKGWVL) form a disordered region. Low complexity predominate over residues 15–36 (TNTGSTGTTKNNSNLSGKGWVL).

This is an uncharacterized protein from Dictyostelium discoideum (Social amoeba).